Here is a 423-residue protein sequence, read N- to C-terminus: MKEIISRHKAGEQIGICSVCSAHPLVIESALRFDLNSGNKVLIEATSNQVNQFGGYTGMKPADFRDFVYGIAQEVGFPRERLILGGDHLGPNCWQNEPAAAAMEKSVELIKAYVAAGFSKIHLDASMSCADDPTPLDPMVVAKRAALLCQAAETTATDEQKRHLTYVIGTEVPVPGGEASAINAVHVTREQDAARTLQTHQAAFRVLGLDEALNRVIAIVVQPGVEFDHTQIIHYQPQAAQALSAWIKETPMVYEAHSTDYQTRQAYRALVRDHYAILKVGPALTFALREAIFALAQMENELISPEQRSRVLEVIDEVMLNEPGYWKKYYRPTWSQAMVDIHFSLSDRIRYYWPHPRIRQSVEKLIANLNNVTLPLGLISQFMPVQFERLSEGVLTPTPHNLIIDKIQDVLRAYRFGCTPDVA.

This sequence belongs to the GatZ/KbaZ family. GatZ subfamily. Forms a complex with GatY.

It functions in the pathway carbohydrate metabolism; D-tagatose 6-phosphate degradation; D-glyceraldehyde 3-phosphate and glycerone phosphate from D-tagatose 6-phosphate: step 2/2. Component of the tagatose-1,6-bisphosphate aldolase GatYZ that is required for full activity and stability of the Y subunit. Could have a chaperone-like function for the proper and stable folding of GatY. When expressed alone, GatZ does not show any aldolase activity. Is involved in the catabolism of galactitol. This is D-tagatose-1,6-bisphosphate aldolase subunit GatZ from Salmonella newport (strain SL254).